Reading from the N-terminus, the 547-residue chain is Calcium-dependent protein kinase 16 (547 aa).

Residues 1–53 (MGNCCRSPAAAAREDVKTSHFPASTGGGKKKPHQARNGGGGGGGGGGGGWEKK) are disordered. The N-myristoyl glycine moiety is linked to residue Gly2. Residues 37-49 (NGGGGGGGGGGGG) show a composition bias toward gly residues. The Protein kinase domain maps to 73 to 331 (YALDRELGRG…AKQVLEHTWL (259 aa)). Residues 79 to 87 (LGRGEFGVT) and Lys102 each bind ATP. Catalysis depends on Asp197, which acts as the Proton acceptor. The tract at residues 337–367 (APNVPLGDIVKSRLKQFSRMNRFKRRALRVI) is autoinhibitory domain. 4 consecutive EF-hand domains span residues 374 to 409 (EEVE…FGSH), 410 to 445 (LAES…LQRM), 446 to 481 (ANGE…DGAT), and 482 to 517 (DIME…GTDW). Ca(2+) contacts are provided by Asp387, Asp389, Asp391, Glu398, Asp423, Asn425, Glu434, Asp459, Asp461, Asn463, Tyr465, Glu470, Asp495, Asp497, Asp499, Lys501, and Glu506.

Belongs to the protein kinase superfamily. Ser/Thr protein kinase family. CDPK subfamily.

Its subcellular location is the membrane. It catalyses the reaction L-seryl-[protein] + ATP = O-phospho-L-seryl-[protein] + ADP + H(+). It carries out the reaction L-threonyl-[protein] + ATP = O-phospho-L-threonyl-[protein] + ADP + H(+). Activated by calcium. Autophosphorylation may play an important role in the regulation of the kinase activity. May play a role in signal transduction pathways that involve calcium as a second messenger. The polypeptide is Calcium-dependent protein kinase 16 (Oryza sativa subsp. japonica (Rice)).